Consider the following 1353-residue polypeptide: Patatin-like phospholipase domain-containing protein ZK370.4 (1353 aa).

A helical transmembrane segment spans residues 12–32 (IFLVTFIYNHVLLILFTVCII). Positions 49 to 64 (TPSSASSSATPSSRNS) are enriched in low complexity. Disordered regions lie at residues 49–188 (TPSS…STAF) and 199–218 (SRSYFRQNQENNKDTRVRPP). Positions 91–123 (SPKSGTPTNTQTIEPPTSLNLNMVNSASGSNLS) are enriched in polar residues. Composition is skewed to basic residues over residues 126 to 138 (RRMRKRDWAKKLY) and 170 to 184 (PRRRSKHGNSSRRRQ). A nucleoside 3',5'-cyclic phosphate contacts are provided by residues 245 to 372 (LKML…VITR), 444 to 581 (FGLV…VLRR), and 570 to 692 (IYLP…LGQY). Positions 942 to 1108 (LVLGGGGARG…VNNVPADVMR (167 aa)) constitute a PNPLA domain. A GXGXXG motif is present at residues 946–951 (GGGARG). A GXSXG motif is present at residues 973–977 (GTSIG). S975 (nucleophile) is an active-site residue. Catalysis depends on D1095, which acts as the Proton acceptor. The DGA/G motif lies at 1095 to 1097 (DGG). Disordered stretches follow at residues 1230–1249 (EKETRKFKRQQSRREKPDVS), 1274–1293 (SMSLNPSANGPVGRAGDHFL), and 1305–1353 (YEEE…PPSS). Over residues 1328–1337 (GPPSSSSSGG) the composition is skewed to low complexity.

This sequence belongs to the NTE family.

The protein localises to the membrane. In Caenorhabditis elegans, this protein is Patatin-like phospholipase domain-containing protein ZK370.4.